A 1487-amino-acid polypeptide reads, in one-letter code: Protein cft1 (1487 aa).

The segment covering 486–504 has biased composition (acidic residues); the sequence is DLDLDDEDLEDDDDDDLYG. The tract at residues 486–513 is disordered; that stretch reads DLDLDDEDLEDDDDDDLYGEESASPEQA.

Belongs to the CFT1 family.

The protein resides in the nucleus. Functionally, RNA-binding component of the cleavage and polyadenylation factor (CPF) complex, which plays a key role in polyadenylation-dependent pre-mRNA 3'-end formation and cooperates with cleavage factors including the CFIA complex and hrp1/CFIB. Involved in poly(A) site recognition. May be involved in coupling transcription termination and mRNA 3'-end formation. This Neurospora crassa (strain ATCC 24698 / 74-OR23-1A / CBS 708.71 / DSM 1257 / FGSC 987) protein is Protein cft1 (paa-3).